Here is a 168-residue protein sequence, read N- to C-terminus: Small ribosomal subunit protein uS5 (168 aa).

Residues 13–76 enclose the S5 DRBM domain; sequence LEENVVAINR…EDAKRKLITV (64 aa).

This sequence belongs to the universal ribosomal protein uS5 family. As to quaternary structure, part of the 30S ribosomal subunit. Contacts proteins S4 and S8.

Its function is as follows. With S4 and S12 plays an important role in translational accuracy. Located at the back of the 30S subunit body where it stabilizes the conformation of the head with respect to the body. In Leuconostoc mesenteroides subsp. mesenteroides (strain ATCC 8293 / DSM 20343 / BCRC 11652 / CCM 1803 / JCM 6124 / NCDO 523 / NBRC 100496 / NCIMB 8023 / NCTC 12954 / NRRL B-1118 / 37Y), this protein is Small ribosomal subunit protein uS5.